A 275-amino-acid chain; its full sequence is Putative carbamate hydrolase RutD (275 aa).

The protein belongs to the AB hydrolase superfamily. Hydrolase RutD family.

The enzyme catalyses carbamate + 2 H(+) = NH4(+) + CO2. Functionally, involved in pyrimidine catabolism. May facilitate the hydrolysis of carbamate, a reaction that can also occur spontaneously. The sequence is that of Putative carbamate hydrolase RutD from Escherichia coli (strain UTI89 / UPEC).